A 344-amino-acid chain; its full sequence is Probable dual-specificity RNA methyltransferase RlmN (344 aa).

Catalysis depends on glutamate 92, which acts as the Proton acceptor. The Radical SAM core domain maps to 98 to 325 (DEDRATLCVS…TTIRASRGED (228 aa)). A disulfide bridge links cysteine 105 with cysteine 330. 3 residues coordinate [4Fe-4S] cluster: cysteine 112, cysteine 116, and cysteine 119. S-adenosyl-L-methionine is bound by residues 157 to 158 (GE), serine 189, 211 to 213 (SLH), and histidine 287. The active-site S-methylcysteine intermediate is cysteine 330.

The protein belongs to the radical SAM superfamily. RlmN family. The cofactor is [4Fe-4S] cluster.

It is found in the cytoplasm. The enzyme catalyses adenosine(2503) in 23S rRNA + 2 reduced [2Fe-2S]-[ferredoxin] + 2 S-adenosyl-L-methionine = 2-methyladenosine(2503) in 23S rRNA + 5'-deoxyadenosine + L-methionine + 2 oxidized [2Fe-2S]-[ferredoxin] + S-adenosyl-L-homocysteine. It carries out the reaction adenosine(37) in tRNA + 2 reduced [2Fe-2S]-[ferredoxin] + 2 S-adenosyl-L-methionine = 2-methyladenosine(37) in tRNA + 5'-deoxyadenosine + L-methionine + 2 oxidized [2Fe-2S]-[ferredoxin] + S-adenosyl-L-homocysteine. Specifically methylates position 2 of adenine 2503 in 23S rRNA and position 2 of adenine 37 in tRNAs. In Bacteroides fragilis (strain ATCC 25285 / DSM 2151 / CCUG 4856 / JCM 11019 / LMG 10263 / NCTC 9343 / Onslow / VPI 2553 / EN-2), this protein is Probable dual-specificity RNA methyltransferase RlmN.